The chain runs to 73 residues: Small, acid-soluble spore protein C5 (73 aa).

Belongs to the alpha/beta-type SASP family.

In terms of biological role, SASP are bound to spore DNA. They are double-stranded DNA-binding proteins that cause DNA to change to an a-like conformation. They protect the DNA backbone from chemical and enzymatic cleavage and are thus involved in dormant spore's high resistance to UV light. The chain is Small, acid-soluble spore protein C5 (SASP-C5) from Priestia megaterium (Bacillus megaterium).